The chain runs to 938 residues: AP-4 complex subunit epsilon (938 aa).

HEAT repeat units lie at residues Asp-118 to Glu-153, Thr-154 to Ser-190, Val-192 to Asn-227, Ser-234 to Leu-272, Lys-321 to Asp-358, Ile-359 to Val-395, Val-397 to Pro-431, Lys-454 to Leu-495, Tyr-517 to Ala-556, and Asp-562 to Glu-601. 4 disordered regions span residues Glu-690–Ser-712, Trp-725–Leu-867, Val-880–Leu-912, and Arg-919–Gly-938. A compositionally biased stretch (polar residues) spans Tyr-694–Val-706. The span at Pro-728–Ala-744 shows a compositional bias: low complexity. A compositionally biased stretch (basic and acidic residues) spans Ser-764–Arg-779. The span at Ala-808–Pro-821 shows a compositional bias: polar residues. Low complexity-rich tracts occupy residues Asp-853–Asp-863 and Val-880–Ser-891. One copy of the HEAT 11 repeat lies at Val-874–Ala-911. The segment covering Lys-892 to Pro-906 has biased composition (polar residues).

The protein belongs to the adaptor complexes large subunit family. As to quaternary structure, adaptor protein complex 4 (AP-4) is a heterotetramer composed of two large adaptins (epsilon-type subunit and beta-type subunit), a medium adaptin (mu-type subunit) and a small adaptin (sigma-type subunit).

It localises to the golgi apparatus. Its subcellular location is the trans-Golgi network. The protein localises to the membrane. It is found in the coated pit. Subunit of novel type of clathrin- or non-clathrin-associated protein coat involved in targeting proteins from the trans-Golgi network (TGN) to the endosomal-lysosomal system. This Arabidopsis thaliana (Mouse-ear cress) protein is AP-4 complex subunit epsilon.